We begin with the raw amino-acid sequence, 27 residues long: Chitinase 47 kDa (27 aa).

Residues 3-27 (SKVVGYFTEWGTYDRKYYVKNIEXS) enclose the GH18 domain.

The protein belongs to the glycosyl hydrolase 18 family. Chitinase class II subfamily. In terms of assembly, homodimer.

The catalysed reaction is Random endo-hydrolysis of N-acetyl-beta-D-glucosaminide (1-&gt;4)-beta-linkages in chitin and chitodextrins.. Functionally, able to cleave chitin oligomers from N=3 to 6. The sequence is that of Chitinase 47 kDa from Streptomyces olivaceoviridis (Streptomyces corchorusii).